A 382-amino-acid polypeptide reads, in one-letter code: Polyadenylate-binding protein 5 (382 aa).

4 RRM domains span residues 18–96, 106–182, 199–276, and 302–378; these read AALY…WSQP, GNIF…RFKF, TNVF…RAQK, and VPIY…LGQA.

Its subcellular location is the cytoplasm. In terms of biological role, binds the poly(A) tail of mRNA. May be involved in cytoplasmic regulatory processes of mRNA metabolism. Can probably bind to cytoplasmic RNA sequences other than poly(A) in vivo. The chain is Polyadenylate-binding protein 5 (PABPC5) from Gorilla gorilla gorilla (Western lowland gorilla).